A 375-amino-acid polypeptide reads, in one-letter code: Erythronate-4-phosphate dehydrogenase (375 aa).

Substrate contacts are provided by Ser-45 and Thr-66. Positions 146 and 175 each coordinate NAD(+). The active site involves Arg-208. Asp-232 contributes to the NAD(+) binding site. Residue Glu-237 is part of the active site. His-254 (proton donor) is an active-site residue. Gly-257 contacts NAD(+). Tyr-258 provides a ligand contact to substrate.

This sequence belongs to the D-isomer specific 2-hydroxyacid dehydrogenase family. PdxB subfamily. As to quaternary structure, homodimer.

The protein resides in the cytoplasm. It carries out the reaction 4-phospho-D-erythronate + NAD(+) = (R)-3-hydroxy-2-oxo-4-phosphooxybutanoate + NADH + H(+). It participates in cofactor biosynthesis; pyridoxine 5'-phosphate biosynthesis; pyridoxine 5'-phosphate from D-erythrose 4-phosphate: step 2/5. Functionally, catalyzes the oxidation of erythronate-4-phosphate to 3-hydroxy-2-oxo-4-phosphonooxybutanoate. In Yersinia pseudotuberculosis serotype O:1b (strain IP 31758), this protein is Erythronate-4-phosphate dehydrogenase.